The chain runs to 128 residues: Probable 4-amino-4-deoxy-L-arabinose-phosphoundecaprenol flippase subunit ArnF (128 aa).

The Cytoplasmic segment spans residues 1 to 2 (MG). Residues 3 to 23 (LMWGLFSVIIASAAQLSMGFA) traverse the membrane as a helical segment. Topologically, residues 24–35 (ASHLPPMTHLWD) are periplasmic. The helical transmembrane segment at 36-56 (FIAALLAFGLDARILLLGLLG) threads the bilayer. Residues 57–76 (YLLSVFCWYKTLHKLALSKA) lie on the Cytoplasmic side of the membrane. Residues 77 to 97 (YALLSMSYVLVWIASMVLPGW) form a helical membrane-spanning segment. The Periplasmic segment spans residues 98–100 (EGT). Residues 101-121 (FSLKALLGVACIMSGLMLIFL) traverse the membrane as a helical segment. The Cytoplasmic segment spans residues 122–128 (PTTKQRY).

It belongs to the ArnF family. As to quaternary structure, heterodimer of ArnE and ArnF.

It localises to the cell inner membrane. Its pathway is bacterial outer membrane biogenesis; lipopolysaccharide biosynthesis. Its function is as follows. Translocates 4-amino-4-deoxy-L-arabinose-phosphoundecaprenol (alpha-L-Ara4N-phosphoundecaprenol) from the cytoplasmic to the periplasmic side of the inner membrane. The sequence is that of Probable 4-amino-4-deoxy-L-arabinose-phosphoundecaprenol flippase subunit ArnF from Escherichia coli O45:K1 (strain S88 / ExPEC).